The following is a 778-amino-acid chain: Ent-trachylobane synthase KSL2, chloroplastic (778 aa).

The transit peptide at 1 to 37 (MLLTCTNSLKISSQAKEWESKTLTGMSLEQLNKRIRI) directs the protein to the chloroplast. Asp529, Asp533, Asn672, Asp673, and Asp680 together coordinate Mg(2+). Residues 529–533 (DDFFD) carry the DDXXD motif motif.

Belongs to the terpene synthase family. It depends on Mg(2+) as a cofactor.

It localises to the plastid. The protein resides in the chloroplast. It carries out the reaction ent-copalyl diphosphate = ent-trachylobane + diphosphate. The catalysed reaction is ent-copalyl diphosphate = ent-kaur-16-ene + diphosphate. The protein operates within secondary metabolite biosynthesis; terpenoid biosynthesis. Diterpene cyclase involved in the biosynthesis of labdane-related diterpenoids (LRDs) natural products. Catalyzes the cyclization of ent-CDP into ent-trachylobane as a major and ent-kaurene as a minor product. The sequence is that of Ent-trachylobane synthase KSL2, chloroplastic from Ricinus communis (Castor bean).